We begin with the raw amino-acid sequence, 122 residues long: Ribosomal protein eL22-like (122 aa).

Phosphoserine occurs at positions 112, 118, and 120.

This sequence belongs to the eukaryotic ribosomal protein eL22 family.

This Bos taurus (Bovine) protein is Ribosomal protein eL22-like (RPL22L1).